Consider the following 664-residue polypeptide: Gametogenetin-binding protein 2 (664 aa).

Disordered regions lie at residues 375-425 (QEKK…NTSE) and 447-476 (KKGL…QEGS). The segment covering 376–388 (EKKRQKKNRRKNK) has biased composition (basic residues). Positions 452 to 475 (PHSNVSDCGYSSSLEGSEPGSQEG) are enriched in polar residues.

It localises to the cytoplasm. May be involved in spermatogenesis. The protein is Gametogenetin-binding protein 2 (ggnbp2) of Xenopus laevis (African clawed frog).